Consider the following 404-residue polypeptide: Probable tRNA sulfurtransferase (404 aa).

A THUMP domain is found at 61–166 (EAVSERLKDV…SGYSYIMCDE (106 aa)). ATP-binding positions include 184-185 (LL), 209-210 (HF), arginine 266, glycine 288, and glutamine 297.

The protein belongs to the ThiI family.

The protein resides in the cytoplasm. It catalyses the reaction [ThiI sulfur-carrier protein]-S-sulfanyl-L-cysteine + a uridine in tRNA + 2 reduced [2Fe-2S]-[ferredoxin] + ATP + H(+) = [ThiI sulfur-carrier protein]-L-cysteine + a 4-thiouridine in tRNA + 2 oxidized [2Fe-2S]-[ferredoxin] + AMP + diphosphate. It carries out the reaction [ThiS sulfur-carrier protein]-C-terminal Gly-Gly-AMP + S-sulfanyl-L-cysteinyl-[cysteine desulfurase] + AH2 = [ThiS sulfur-carrier protein]-C-terminal-Gly-aminoethanethioate + L-cysteinyl-[cysteine desulfurase] + A + AMP + 2 H(+). Its pathway is cofactor biosynthesis; thiamine diphosphate biosynthesis. Functionally, catalyzes the ATP-dependent transfer of a sulfur to tRNA to produce 4-thiouridine in position 8 of tRNAs, which functions as a near-UV photosensor. Also catalyzes the transfer of sulfur to the sulfur carrier protein ThiS, forming ThiS-thiocarboxylate. This is a step in the synthesis of thiazole, in the thiamine biosynthesis pathway. The sulfur is donated as persulfide by IscS. The protein is Probable tRNA sulfurtransferase of Bacillus cereus (strain ATCC 10987 / NRS 248).